The primary structure comprises 391 residues: Galactarate dehydratase (D-threo-forming) (391 aa).

Arg-15 contributes to the substrate binding site. Mg(2+) is bound by residues Asp-42 and His-45. A substrate-binding site is contributed by Tyr-89. The active-site Proton donor is the Tyr-90. The Proton acceptor role is filled by Tyr-164. Residues Asp-193, Glu-221, and His-246 each coordinate Mg(2+). Thr-296 provides a ligand contact to substrate. Residue Thr-297 participates in Mg(2+) binding. Arg-385 contacts substrate.

Belongs to the mandelate racemase/muconate lactonizing enzyme family. It depends on Mg(2+) as a cofactor.

The catalysed reaction is galactarate = (2S,3R)-dihydroxy-5-oxohexanedioate + H2O. Catalyzes the regioselective dehydration of galactarate into 2-keto-D-threo-4,5-dihydroxyadipate ((2S,3R)-dihydroxy-5-oxohexanedioate). Is not active on other acid sugars. The protein is Galactarate dehydratase (D-threo-forming) of Oceanobacillus iheyensis (strain DSM 14371 / CIP 107618 / JCM 11309 / KCTC 3954 / HTE831).